Here is a 198-residue protein sequence, read N- to C-terminus: GTP cyclohydrolase-2 (198 aa).

Position 52-56 (52-56) interacts with GTP; that stretch reads RMHSE. Residues Cys57, Cys68, and Cys70 each coordinate Zn(2+). GTP-binding positions include Gln73, 94 to 96, and Thr116; that span reads EGR. The active-site Proton acceptor is the Asp128. Arg130 serves as the catalytic Nucleophile. Residues Thr151 and Lys156 each contribute to the GTP site.

Belongs to the GTP cyclohydrolase II family. Requires Zn(2+) as cofactor.

It carries out the reaction GTP + 4 H2O = 2,5-diamino-6-hydroxy-4-(5-phosphoribosylamino)-pyrimidine + formate + 2 phosphate + 3 H(+). Its pathway is cofactor biosynthesis; riboflavin biosynthesis; 5-amino-6-(D-ribitylamino)uracil from GTP: step 1/4. In terms of biological role, catalyzes the conversion of GTP to 2,5-diamino-6-ribosylamino-4(3H)-pyrimidinone 5'-phosphate (DARP), formate and pyrophosphate. The sequence is that of GTP cyclohydrolase-2 from Vibrio parahaemolyticus serotype O3:K6 (strain RIMD 2210633).